The following is a 465-amino-acid chain: MKHIVKHIHFVGIGGAGMSGIAEVLVNLGYQVSGSDLARNAVTERLEALGARVSIGHDAANIEGANAVVVSTAVRSDNPEVLAARRLRVPIVPRAVMLAELMRLKQGIAIAGTHGKTTTTSLVASVLAAGGLDPTFVIGGRLTSAGANARLGTGDFIVAEADESDASFLNLYPVIEVITNIDADHMDTYGHDFARLKQAFIEFTQRLPFYGSAVVCIDDANVRQIVPLISKPVVRYGFAADAQVRAENVEARDGRMHFTVRREGREPLPVVLNLPGLHNVQNALAAIAIATDLDVADAAIQQALAEFNGVGRRFQRYGEIAAAGGGAYTLIDDYGHHPVEMAATIAAARGAFPGRRLVLAFQPHRYTRTRDCFDDFVNVLSTVDALVLTEVYAAGEAPISTANGDALSRALRAAGKVEPVFVATVDEVPDALAKLARDGDVVITMGAGSIGGVPGKLAQDTQQKG.

ATP is bound at residue 112 to 118 (GTHGKTT).

This sequence belongs to the MurCDEF family.

It is found in the cytoplasm. It carries out the reaction UDP-N-acetyl-alpha-D-muramate + L-alanine + ATP = UDP-N-acetyl-alpha-D-muramoyl-L-alanine + ADP + phosphate + H(+). It participates in cell wall biogenesis; peptidoglycan biosynthesis. Its function is as follows. Cell wall formation. This is UDP-N-acetylmuramate--L-alanine ligase from Burkholderia pseudomallei (strain 1106a).